We begin with the raw amino-acid sequence, 573 residues long: MRASQFFLATQKEAPQEAELASHKLMLRAGLIKRLGSGLYSWMPLGLRVLRKVETIVREEMNRAGALELLMPAVQPKELWEETGRWAVFGPQMLKIRDRHERDFCFGPTHEEVITDIARREIRSYKQLPLNFYQIQTKFRDEIRPRFGVMRAREFVMKDGYSFHTSLESLQQTYDTMYQAYSNIFNRLGLKFRAVRADTGAIGGDGSHEFHVLADSGEDALAYCEHSDFAANVELAEALAPEHPRGEPKEPLREVDTPKQTTCEDVAALLGISLQQTVKSIAVVATDEAGNSQFYLLLLRGDHALNEVKAAKVPGLSSFRFASELEIREYLGCPPGFIGPVGVSTQVNVVADRSVAVMSDFVCGANKPKLHLAGVNFGRDLPEPMIVADIRNVVEGDPSPDGKGCISLCRGIEVGHIFQLRTKYTEAMEATYLDENGQKQFMEMGCYGIGVSRIVGAAIEQGNDERGIIFPAAMAPFSVAIAPIGYDKSEAVQSAAHALYDELSALGIDVLLDDRGERPGVMFADLELIGIPHRIVIGDRGLKEGQVEYQARTAASAETVALADIVSIVRQAL.

Belongs to the class-II aminoacyl-tRNA synthetase family. ProS type 1 subfamily. Homodimer.

The protein localises to the cytoplasm. The catalysed reaction is tRNA(Pro) + L-proline + ATP = L-prolyl-tRNA(Pro) + AMP + diphosphate. Catalyzes the attachment of proline to tRNA(Pro) in a two-step reaction: proline is first activated by ATP to form Pro-AMP and then transferred to the acceptor end of tRNA(Pro). As ProRS can inadvertently accommodate and process non-cognate amino acids such as alanine and cysteine, to avoid such errors it has two additional distinct editing activities against alanine. One activity is designated as 'pretransfer' editing and involves the tRNA(Pro)-independent hydrolysis of activated Ala-AMP. The other activity is designated 'posttransfer' editing and involves deacylation of mischarged Ala-tRNA(Pro). The misacylated Cys-tRNA(Pro) is not edited by ProRS. The sequence is that of Proline--tRNA ligase from Methylobacillus flagellatus (strain ATCC 51484 / DSM 6875 / VKM B-1610 / KT).